The chain runs to 363 residues: Aminomethyltransferase (363 aa).

It belongs to the GcvT family. As to quaternary structure, the glycine cleavage system is composed of four proteins: P, T, L and H.

The catalysed reaction is N(6)-[(R)-S(8)-aminomethyldihydrolipoyl]-L-lysyl-[protein] + (6S)-5,6,7,8-tetrahydrofolate = N(6)-[(R)-dihydrolipoyl]-L-lysyl-[protein] + (6R)-5,10-methylene-5,6,7,8-tetrahydrofolate + NH4(+). In terms of biological role, the glycine cleavage system catalyzes the degradation of glycine. This chain is Aminomethyltransferase, found in Staphylococcus saprophyticus subsp. saprophyticus (strain ATCC 15305 / DSM 20229 / NCIMB 8711 / NCTC 7292 / S-41).